A 488-amino-acid polypeptide reads, in one-letter code: Glutamate--tRNA ligase (488 aa).

Positions 16–26 match the 'HIGH' region motif; sequence PSPTGEPHVGT. The short motif at 257–261 is the 'KMSKS' region element; it reads KLSKR. K260 is an ATP binding site.

This sequence belongs to the class-I aminoacyl-tRNA synthetase family. Glutamate--tRNA ligase type 1 subfamily. As to quaternary structure, monomer.

It is found in the cytoplasm. It catalyses the reaction tRNA(Glu) + L-glutamate + ATP = L-glutamyl-tRNA(Glu) + AMP + diphosphate. Functionally, catalyzes the attachment of glutamate to tRNA(Glu) in a two-step reaction: glutamate is first activated by ATP to form Glu-AMP and then transferred to the acceptor end of tRNA(Glu). The polypeptide is Glutamate--tRNA ligase (Rhizobium johnstonii (strain DSM 114642 / LMG 32736 / 3841) (Rhizobium leguminosarum bv. viciae)).